Consider the following 626-residue polypeptide: tRNA uridine 5-carboxymethylaminomethyl modification enzyme MnmG (626 aa).

13–18 (GGGHAG) serves as a coordination point for FAD. 273–287 (GPRYCPSIEDKIHRF) serves as a coordination point for NAD(+).

Belongs to the MnmG family. As to quaternary structure, homodimer. Heterotetramer of two MnmE and two MnmG subunits. The cofactor is FAD.

It is found in the cytoplasm. In terms of biological role, NAD-binding protein involved in the addition of a carboxymethylaminomethyl (cmnm) group at the wobble position (U34) of certain tRNAs, forming tRNA-cmnm(5)s(2)U34. This Acinetobacter baumannii (strain SDF) protein is tRNA uridine 5-carboxymethylaminomethyl modification enzyme MnmG.